The sequence spans 373 residues: Filamin-binding LIM protein 1 (373 aa).

A filamin-binding region spans residues 1–70 (MASKPEKRVA…SPWTTPGRAA (70 aa)). Disordered regions lie at residues 41–119 (RPWE…PSEE) and 135–176 (QLHL…PVEK). Residues 104 to 114 (LPPPPPPPPVL) are compositionally biased toward pro residues. 3 LIM zinc-binding domains span residues 181-242 (DICA…TLER), 243-300 (CGKC…RKFA), and 301-370 (PVCS…RSAA). The interval 276-373 (IGDESFALGS…HVKRSAAGCC (98 aa)) is FERMT2-binding.

Interacts with NKX2-5. Isoform 1 and isoform 3 interact with FERMT2, FLNA, FLNB and FLNC. Isoform 2 interacts with FLNB. In terms of tissue distribution, isoform 1 and isoform 3 are expressed in heart, kidney, lung, pancreas, placenta and platelets. Isoform 2 is expressed in brain, heart, kidney, lung, pancreas, placenta, skeletal muscle and platelets.

It localises to the cell junction. Its subcellular location is the focal adhesion. The protein localises to the cytoplasm. The protein resides in the cytoskeleton. It is found in the stress fiber. Functionally, serves as an anchoring site for cell-ECM adhesion proteins and filamin-containing actin filaments. Is implicated in cell shape modulation (spreading) and motility. May participate in the regulation of filamin-mediated cross-linking and stabilization of actin filaments. May also regulate the assembly of filamin-containing signaling complexes that control actin assembly. Promotes dissociation of FLNA from ITGB3 and ITGB7. Promotes activation of integrins and regulates integrin-mediated cell-cell adhesion. This is Filamin-binding LIM protein 1 (FBLIM1) from Homo sapiens (Human).